Reading from the N-terminus, the 478-residue chain is Lysosome membrane protein 2 (478 aa).

Over 2–4 (ARC) the chain is Cytoplasmic. The chain crosses the membrane as a helical span at residues 5–27 (CFYTAGTLSLLLLVTSVTLLVAR). Over 28-433 (VFQKAVDQTI…QLKSVINTTL (406 aa)) the chain is Lumenal. N-linked (GlcNAc...) asparagine glycosylation is found at N45, N68, N105, and N122. Residues 155–191 (IIEAMLKAYQQTLFVTHTVHELLWGYKDEVLSLVHIF) are important for interaction with GBA1. N206, N224, N249, and N304 each carry an N-linked (GlcNAc...) asparagine glycan. 2 cysteine pairs are disulfide-bonded: C274-C329 and C312-C318. N325, N412, and N430 each carry an N-linked (GlcNAc...) asparagine glycan. Residues 434 to 459 (IVTNIPYIIMALGVFFGLIFTWLACR) form a helical membrane-spanning segment. The Cytoplasmic segment spans residues 460–478 (GQGSTDEGTADERAPLIRT).

It belongs to the CD36 family. In terms of assembly, interacts with GBA1. Post-translationally, acylated by palmitic acid group(s).

It localises to the lysosome membrane. Its function is as follows. Acts as a lysosomal receptor for glucosylceramidase (GBA1) targeting. In Rattus norvegicus (Rat), this protein is Lysosome membrane protein 2 (Scarb2).